Here is a 262-residue protein sequence, read N- to C-terminus: Adenosylcobinamide-GDP ribazoletransferase (262 aa).

8 helical membrane passes run 4 to 26 (AWNG…SIAW), 37 to 57 (CMPL…ALFS), 59 to 79 (FSFS…IWMA), 112 to 132 (VGAF…LFLY), 139 to 159 (IPPA…AWLL), 183 to 203 (AIWA…STAI), 205 to 225 (VQTG…AKPW), and 237 to 257 (VLGA…WLLH).

This sequence belongs to the CobS family. Mg(2+) is required as a cofactor.

It localises to the cell membrane. It carries out the reaction alpha-ribazole + adenosylcob(III)inamide-GDP = adenosylcob(III)alamin + GMP + H(+). The enzyme catalyses alpha-ribazole 5'-phosphate + adenosylcob(III)inamide-GDP = adenosylcob(III)alamin 5'-phosphate + GMP + H(+). Its pathway is cofactor biosynthesis; adenosylcobalamin biosynthesis; adenosylcobalamin from cob(II)yrinate a,c-diamide: step 7/7. Functionally, joins adenosylcobinamide-GDP and alpha-ribazole to generate adenosylcobalamin (Ado-cobalamin). Also synthesizes adenosylcobalamin 5'-phosphate from adenosylcobinamide-GDP and alpha-ribazole 5'-phosphate. The chain is Adenosylcobinamide-GDP ribazoletransferase from Geobacillus kaustophilus (strain HTA426).